A 583-amino-acid chain; its full sequence is Aspartate--tRNA ligase (583 aa).

Position 174 (E174) interacts with L-aspartate. The segment at 198-201 (QITK) is aspartate. An L-aspartate-binding site is contributed by R220. ATP-binding positions include 220–222 (RDE) and Q229. H443 provides a ligand contact to L-aspartate. An ATP-binding site is contributed by E477. R484 provides a ligand contact to L-aspartate. 529 to 532 (GLDR) provides a ligand contact to ATP.

The protein belongs to the class-II aminoacyl-tRNA synthetase family. Type 1 subfamily. In terms of assembly, homodimer.

It is found in the cytoplasm. It carries out the reaction tRNA(Asp) + L-aspartate + ATP = L-aspartyl-tRNA(Asp) + AMP + diphosphate. Functionally, catalyzes the attachment of L-aspartate to tRNA(Asp) in a two-step reaction: L-aspartate is first activated by ATP to form Asp-AMP and then transferred to the acceptor end of tRNA(Asp). The protein is Aspartate--tRNA ligase of Streptococcus agalactiae serotype V (strain ATCC BAA-611 / 2603 V/R).